Consider the following 241-residue polypeptide: MAIVTLAELLEAGVHFGHQARRWNPKMFPYIYTERNGIHIIDLVQTSQLLTEACEFVKQASSDGRKVLFLGTKRQAAGIIAQEAQRCDSYYVNQRWLGGMLTNWVTIKSRVTRLRQLEEQDSSGLIDQLPKKEAAVLRRELDKLRKHLNGIKNMTRLPDIVVVVDQKRETTAIQECLKLGIPTICILDTNCSPEIINIPIPANDDAIRSIKLIIGKIADAIYEGKYGQMEPTELISSAEDK.

It belongs to the universal ribosomal protein uS2 family.

It is found in the plastid. Its subcellular location is the chloroplast. The chain is Small ribosomal subunit protein uS2c (rps2) from Porphyra purpurea (Red seaweed).